A 419-amino-acid polypeptide reads, in one-letter code: MAGDSRNAMNQDMEIGVTPWDPKKIPKQARDYVPIATDRTRLLAEGKKPRQRYMEKSGKCNVHHGNVQETYRYLSDLFTTLVDLKWRFNLLVFTMVYTVTWLFFGFIWWLIAYIRGDLDHVGDQEWIPCVENLSGFVSAFLFSIETETTIGYGFRVITEKCPEGIILLLVQAILGSIVNAFMVGCMFVKISQPKKRAETLMFSNNAVISMRDEKLCLMFRVGDLRNSHIVEASIRAKLIKSRQTKEGEFIPLNQTDINVGFDTGDDRLFLVSPLIISHEINQKSPFWEMSQAQLHQEEFEVVVILEGMVEATGMTCQARSSYMDTEVLWGHRFTPVLTLEKGFYEVDYNTFHDTYETNTPSCCAKELAEMKREGRLLQYLPSPPLLGGCAEAGLDAEAEQNEEDEPKGLGGSREARGSV.

Residues 1 to 86 are Cytoplasmic-facing; that stretch reads MAGDSRNAMN…LFTTLVDLKW (86 aa). Phosphoserine is present on S5. A helical membrane pass occupies residues 87 to 111; sequence RFNLLVFTMVYTVTWLFFGFIWWLI. Residues 112–135 lie on the Extracellular side of the membrane; the sequence is AYIRGDLDHVGDQEWIPCVENLSG. Positions 136–147 form an intramembrane region, helical; Pore-forming; the sequence is FVSAFLFSIETE. The pore-forming intramembrane region spans 148–154; that stretch reads TTIGYGF. Residues 149-154 carry the Selectivity filter motif; that stretch reads TIGYGF. Topologically, residues 155–163 are extracellular; sequence RVITEKCPE. The chain crosses the membrane as a helical span at residues 164–185; that stretch reads GIILLLVQAILGSIVNAFMVGC. Topologically, residues 186-419 are cytoplasmic; it reads MFVKISQPKK…GGSREARGSV (234 aa). Residues 390–419 are disordered; sequence AEAGLDAEAEQNEEDEPKGLGGSREARGSV. Residues 394–405 are compositionally biased toward acidic residues; the sequence is LDAEAEQNEEDE.

The protein belongs to the inward rectifier-type potassium channel (TC 1.A.2.1) family. KCNJ5 subfamily. Associates with KCNJ3/GIRK1 to form a G-protein-activated heteromultimer pore-forming unit. The resulting inward current is much larger. Associates with KCNJ6/GIRK2 to form a G-protein-activated heteromultimer pore-forming unit. As to expression, islets, exocrine pancreas and heart. Expressed in the adrenal cortex, particularly the zona glomerulosa.

Its subcellular location is the membrane. The catalysed reaction is K(+)(in) = K(+)(out). Heteromultimer composed of KCNJ3/GIRK1 and KCNJ5/GIRK4 is activated by phosphatidylinositol 4,5 biphosphate (PtdIns(4,5)P2). Inward rectifier potassium channels are characterized by a greater tendency to allow potassium to flow into the cell rather than out of it. Their voltage dependence is regulated by the concentration of extracellular potassium; as external potassium is raised, the voltage range of the channel opening shifts to more positive voltages. The inward rectification is mainly due to the blockage of outward current by internal magnesium. Can be blocked by external barium. This potassium channel is controlled by G proteins. The protein is G protein-activated inward rectifier potassium channel 4 (KCNJ5) of Homo sapiens (Human).